The primary structure comprises 113 residues: Hydrogenase maturation factor HypA (113 aa).

His-2 contributes to the Ni(2+) binding site. Zn(2+) contacts are provided by Cys-73, Cys-76, Cys-89, and Cys-92.

The protein belongs to the HypA/HybF family.

In terms of biological role, involved in the maturation of [NiFe] hydrogenases. Required for nickel insertion into the metal center of the hydrogenase. In Chlorobium phaeobacteroides (strain BS1), this protein is Hydrogenase maturation factor HypA.